We begin with the raw amino-acid sequence, 1335 residues long: MSRKENLNRSSSSNSIEFNRDRDRDSSNISNSSNINCNNSSQTPPIPQHNSLSGRSKHSSPIHSLKKKGSLVRQGIEDLFSSLSVDTHSSSNSNNNSSSNNNNNNNNHNINSSSESSTPTTPRSSFTPQVTMNSNQSSGNNSPQLSSRSSSQSTLIPSNEPTKSLAKFFLLAQQVDYVGDSSSTLLPVENLGLLSIQWKTYFTIGLNSTTTGYDVLKYISIKTNRDLKSLTLADSDGKIIDNDYILTQQRCKKFVVVEDLNIDDLKMKQLNHLQQLPPPSQQQLPPPQSHQQQLLQQQLQQRLQNQNQNQNNNSNSNSNSSSSSSCSTPQSIVSQQQKLHQMLLNQQQIQSSQSTTPTNSSQKSSPNKVTDHQHVENCNFTSPSPSSPSSPSSPSSGMILDGFNLDGNGGRPTPLIITPSSPSSMRKNPPAIPPRSPSSFSGGSPLNNILLNNTELISEPVTTTTTTTTTTSSSSSLSVTTTISNPNYTQNLPTTPLSNSSSNNNNNGSFITLQDTTNNKSIINNNRESPPESPMGSRKSSGSSNTTSSTTNTTTPSSSSLTTSSGKESRDRDSKDKEKDLIGSGNNNNNNNNNNNNNNNNNKVEKEKENYCKFLDAVNSFNMVGNNGVLFNGEANRNMKLTNAQEEKCKILDNYFNHYYQELFKYLHQRHRRIKTIEDFTVESRMDRQGAEQWMKKQFEKETNFLRNKRAGMKLKEFKILTQIGKGGFGQVFLAQKKDTGDIVTLKRLKKQTVEWANQRNQVSQEKSVMLVDNKWITKLLYSFQDANYLYLAMEYHCGGDFRALLNNLGTLSEDEARFYMIEMIEAISSLHEMGIVHRDCKPSNFVLDKLGHIKLIDFGLSKEGIEKRNGWNKATMNELRKSCLSASFTSNTMKAASAYLSGGTNVMAYRRPIAHSAVGSPEYMSPEIVNDQGYDMTCDYWSLGCVFVEMLCGFNPFCADTPNDVFINILRWKETLDWPLFTQELSVEAADLLKNMLMEQPHRLGGKGKQDFKNHPFFKNHNWDEIVNGQVKPPFVPKVESDIDTSYFEDAVNNDSSTWDIDDNDCGGYGSGGYGGGGPQARDPFNNLKIPFFTYRKSSALSLSMSSEIAQSLNYNNGNTYSNYTSNNNNNNLHNNQIHEKNGNSGYNHFHFDSIEQQNQYQLSLLSPNSSDKSIGMIQYIKKFRYQQLQQQLQQHFQQQNHLQQLKSNHRKSPTRQLISSLLYKGDDKTSILQNYSSQSQPSLANQLQSSSSSPSPSLQSQSQSPSLQSSSKSTPNLSSSLLENPVKEELEYKNQTENEVEIKKENESEEIQSLRDQLKEIIIYEDYDQEYSI.

Disordered regions lie at residues 1-70 (MSRK…KKGS), 85-158 (VDTH…LIPS), 276-447 (LPPP…SPLN), and 462-603 (TTTT…NNNK). Polar residues predominate over residues 8 to 17 (NRSSSSNSIE). The span at 27–41 (SNISNSSNINCNNSS) shows a compositional bias: low complexity. Positions 55–70 (RSKHSSPIHSLKKKGS) are enriched in basic residues. Low complexity predominate over residues 89 to 117 (SSSNSNNNSSSNNNNNNNNHNINSSSESS). The span at 118 to 132 (TPTTPRSSFTPQVTM) shows a compositional bias: polar residues. Residues 133 to 153 (NSNQSSGNNSPQLSSRSSSQS) are compositionally biased toward low complexity. Over residues 276 to 288 (LPPPSQQQLPPPQ) the composition is skewed to pro residues. Composition is skewed to low complexity over residues 289 to 331 (SHQQ…TPQS), 345 to 368 (NQQQ…SPNK), 382 to 396 (SPSP…SPSS), 412 to 424 (PTPL…SPSS), 437 to 447 (PSSFSGGSPLN), and 462 to 484 (TTTT…TTIS). The segment covering 485-497 (NPNYTQNLPTTPL) has biased composition (polar residues). Residues 498 to 507 (SNSSSNNNNN) show a composition bias toward low complexity. Residues 508-528 (GSFITLQDTTNNKSIINNNRE) are compositionally biased toward polar residues. The segment covering 540–566 (SSGSSNTTSSTTNTTTPSSSSLTTSSG) has biased composition (low complexity). A compositionally biased stretch (basic and acidic residues) spans 567–581 (KESRDRDSKDKEKDL). Low complexity predominate over residues 586–602 (NNNNNNNNNNNNNNNNN). Residues 586–613 (NNNNNNNNNNNNNNNNNKVEKEKENYCK) adopt a coiled-coil conformation. The Protein kinase domain maps to 718 to 1019 (FKILTQIGKG…KQDFKNHPFF (302 aa)). Residues 724 to 732 (IGKGGFGQV) and Lys747 each bind ATP. Catalysis depends on Asp840, which acts as the Proton acceptor. The 87-residue stretch at 1020–1106 (KNHNWDEIVN…RKSSALSLSM (87 aa)) folds into the AGC-kinase C-terminal domain. Positions 1239 to 1284 (SQSQPSLANQLQSSSSSPSPSLQSQSQSPSLQSSSKSTPNLSSSLL) are enriched in low complexity. The interval 1239–1313 (SQSQPSLANQ…IKKENESEEI (75 aa)) is disordered. The segment covering 1287 to 1313 (PVKEELEYKNQTENEVEIKKENESEEI) has biased composition (basic and acidic residues). The stretch at 1289 to 1325 (KEELEYKNQTENEVEIKKENESEEIQSLRDQLKEIII) forms a coiled coil.

The protein belongs to the protein kinase superfamily. AGC Ser/Thr protein kinase family.

The enzyme catalyses L-seryl-[protein] + ATP = O-phospho-L-seryl-[protein] + ADP + H(+). It catalyses the reaction L-threonyl-[protein] + ATP = O-phospho-L-threonyl-[protein] + ADP + H(+). In Dictyostelium discoideum (Social amoeba), this protein is Probable serine/threonine-protein kinase ndrC (ndrC).